Consider the following 412-residue polypeptide: Serine hydroxymethyltransferase (412 aa).

(6S)-5,6,7,8-tetrahydrofolate contacts are provided by residues Leu119 and 123–125 (GHL). Lys228 is modified (N6-(pyridoxal phosphate)lysine).

The protein belongs to the SHMT family. As to quaternary structure, homodimer. Requires pyridoxal 5'-phosphate as cofactor.

It localises to the cytoplasm. It catalyses the reaction (6R)-5,10-methylene-5,6,7,8-tetrahydrofolate + glycine + H2O = (6S)-5,6,7,8-tetrahydrofolate + L-serine. It functions in the pathway one-carbon metabolism; tetrahydrofolate interconversion. The protein operates within amino-acid biosynthesis; glycine biosynthesis; glycine from L-serine: step 1/1. Catalyzes the reversible interconversion of serine and glycine with tetrahydrofolate (THF) serving as the one-carbon carrier. This reaction serves as the major source of one-carbon groups required for the biosynthesis of purines, thymidylate, methionine, and other important biomolecules. Also exhibits THF-independent aldolase activity toward beta-hydroxyamino acids, producing glycine and aldehydes, via a retro-aldol mechanism. This Thermodesulfovibrio yellowstonii (strain ATCC 51303 / DSM 11347 / YP87) protein is Serine hydroxymethyltransferase.